The primary structure comprises 827 residues: Lon protease (827 aa).

Residues 1 to 27 (MNDETLREQTTAESEETSPTTPSPEPE) form a disordered region. The 194-residue stretch at 32–225 (LPLIPLEGAV…KVLMFYRKQF (194 aa)) folds into the Lon N-terminal domain. ATP is bound at residue 385 to 392 (GPPGVGKT). The 182-residue stretch at 625 to 806 (IDQPGVAIGL…DEVLSIALLP (182 aa)) folds into the Lon proteolytic domain. Active-site residues include S712 and K755.

It belongs to the peptidase S16 family. In terms of assembly, homohexamer. Organized in a ring with a central cavity.

Its subcellular location is the cytoplasm. It carries out the reaction Hydrolysis of proteins in presence of ATP.. ATP-dependent serine protease that mediates the selective degradation of mutant and abnormal proteins as well as certain short-lived regulatory proteins. Required for cellular homeostasis and for survival from DNA damage and developmental changes induced by stress. Degrades polypeptides processively to yield small peptide fragments that are 5 to 10 amino acids long. Binds to DNA in a double-stranded, site-specific manner. This is Lon protease from Chloroflexus aurantiacus (strain ATCC 29366 / DSM 635 / J-10-fl).